The following is a 312-amino-acid chain: Ribosomal protein L11 methyltransferase (312 aa).

S-adenosyl-L-methionine is bound by residues Thr-160, Gly-181, Asp-203, and Asn-246.

It belongs to the methyltransferase superfamily. PrmA family.

The protein localises to the cytoplasm. It catalyses the reaction L-lysyl-[protein] + 3 S-adenosyl-L-methionine = N(6),N(6),N(6)-trimethyl-L-lysyl-[protein] + 3 S-adenosyl-L-homocysteine + 3 H(+). Functionally, methylates ribosomal protein L11. The chain is Ribosomal protein L11 methyltransferase from Staphylococcus epidermidis (strain ATCC 12228 / FDA PCI 1200).